The following is a 230-amino-acid chain: Cytidylate kinase (230 aa).

12 to 20 (GPSGAGKGT) is an ATP binding site.

Belongs to the cytidylate kinase family. Type 1 subfamily.

The protein resides in the cytoplasm. It catalyses the reaction CMP + ATP = CDP + ADP. The enzyme catalyses dCMP + ATP = dCDP + ADP. The polypeptide is Cytidylate kinase (Shewanella piezotolerans (strain WP3 / JCM 13877)).